Consider the following 198-residue polypeptide: Ribosome maturation factor RimM (198 aa).

Residues 92-168 (DDEYYHADLI…IELPAEIEGE (77 aa)) enclose the PRC barrel domain. The span at 163 to 172 (AEIEGEDQDS) shows a compositional bias: acidic residues. The tract at residues 163 to 198 (AEIEGEDQDSSDNAGSPEGDAAASNSARHPRESGDP) is disordered.

The protein belongs to the RimM family. In terms of assembly, binds ribosomal protein uS19.

It localises to the cytoplasm. Functionally, an accessory protein needed during the final step in the assembly of 30S ribosomal subunit, possibly for assembly of the head region. Essential for efficient processing of 16S rRNA. May be needed both before and after RbfA during the maturation of 16S rRNA. It has affinity for free ribosomal 30S subunits but not for 70S ribosomes. In Bradyrhizobium sp. (strain BTAi1 / ATCC BAA-1182), this protein is Ribosome maturation factor RimM.